We begin with the raw amino-acid sequence, 224 residues long: uncharacterized protein (224 aa).

Residues glycine 177, isoleucine 197, and leucine 206 each coordinate S-adenosyl-L-methionine.

Belongs to the class IV-like SAM-binding methyltransferase superfamily. RNA methyltransferase TrmH family.

This is an uncharacterized protein from Archaeoglobus fulgidus (strain ATCC 49558 / DSM 4304 / JCM 9628 / NBRC 100126 / VC-16).